The primary structure comprises 261 residues: 5'-nucleotidase SurE (261 aa).

A divalent metal cation-binding residues include Asp17, Asp18, Ser48, and Asn104.

This sequence belongs to the SurE nucleotidase family. A divalent metal cation serves as cofactor.

It localises to the cytoplasm. It catalyses the reaction a ribonucleoside 5'-phosphate + H2O = a ribonucleoside + phosphate. Nucleotidase that shows phosphatase activity on nucleoside 5'-monophosphates. The polypeptide is 5'-nucleotidase SurE (Deinococcus geothermalis (strain DSM 11300 / CIP 105573 / AG-3a)).